The sequence spans 345 residues: Diacylglycerol O-acyltransferase 1 (345 aa).

Over 1-49 the chain is Cytoplasmic; the sequence is MSEETSIPGIIASTPPISKDSRRNVSHWLQALAVFLHSVSLTLTASWYT. A helical membrane pass occupies residues 50 to 70; sequence VLWAFLPFWPFLIVYLIWLIY. The Lumenal segment spans residues 71–113; sequence DDGFVTGKDRQKRWLRNAPPYRWFCHYFPIRLHKTTELDSEKN. The helical transmembrane segment at 114 to 134 threads the bilayer; the sequence is YIFGYHPHGIISLGAFGGFAS. The Cytoplasmic segment spans residues 135-141; the sequence is EGADFSK. The chain crosses the membrane as a helical span at residues 142-162; that stretch reads LFPGINVSVLTLNSNFYVPVY. Residues 163-216 lie on the Lumenal side of the membrane; it reads RDYLMALNINSVSKKSCVSILSRKPGDSVLIVIGGAQESLLSRPGQNNLVLKKR. Residues 217 to 237 traverse the membrane as a helical segment; that stretch reads FGFVKLAFLTGSSLVPCFAFG. The Cytoplasmic portion of the chain corresponds to 238-345; that stretch reads ESDIFEQVDN…NRISELKLSA (108 aa).

It belongs to the diacylglycerol acyltransferase family.

It is found in the lipid droplet. The protein resides in the endoplasmic reticulum membrane. It catalyses the reaction an acyl-CoA + a 1,2-diacyl-sn-glycerol = a triacyl-sn-glycerol + CoA. The enzyme catalyses a 2-acylglycerol + an acyl-CoA = a 1,2-diacyl-sn-glycerol + CoA. It functions in the pathway glycerolipid metabolism; triacylglycerol biosynthesis. Its function is as follows. Catalyzes the terminal and only committed step in triacylglycerol (TAG) synthesis by using diacylglycerol (DAG) and fatty acyl-CoA as substrates. Required for storage lipid synthesis. Major DAG esterifying enzyme in stationary phase when TAG production is particularly active. Involved in lipid particle synthesis from the endoplasmic reticulum, promoting localized TAG production at discrete ER subdomains. The sequence is that of Diacylglycerol O-acyltransferase 1 (dga1) from Schizosaccharomyces pombe (strain 972 / ATCC 24843) (Fission yeast).